Consider the following 349-residue polypeptide: MGQQHGARNGLTHRELPRGMGLLLAMALMNVVLYVCLDHLFISPGRATEDPRRCPPGYFRMGRMRNCSRWLSCEELRTEVRQLKLVGEGAVKRVFLSEWNEHKVALSRLTRLEMKEDFLHGLRMLTSLQSQHVVTLAGFCEEDGTILTEYHPLGSLSNLEETLNLSKYRDVNTWQHRLRLAVEYVSIINYLHHSPLGTRVMCDSNDLPKTLSQYLLTSNFSIVANDLDALPLVDHGSRVLVKCGHRELHGDFVAPEQLWPYGEDTPFQDDLMPPYDEKIDIWKIPDVSSFLLGHVEGSDMVRFHLFDIHKACKNQFPAERPTAQNVLDAYQKVFHSLRDTVMSQTKEML.

The Cytoplasmic segment spans residues 1-19; that stretch reads MGQQHGARNGLTHRELPRG. Residues 20–42 traverse the membrane as a helical; Signal-anchor for type II membrane protein segment; that stretch reads MGLLLAMALMNVVLYVCLDHLFI. Residues 43 to 349 are Lumenal-facing; the sequence is SPGRATEDPR…TVMSQTKEML (307 aa). Asn66, Asn164, and Asn219 each carry an N-linked (GlcNAc...) asparagine glycan. In terms of domain architecture, Protein kinase spans 80–349; it reads VRQLKLVGEG…TVMSQTKEML (270 aa).

Belongs to the protein kinase superfamily. Ser/Thr protein kinase family. STKL subfamily.

It is found in the endoplasmic reticulum membrane. It carries out the reaction 3-O-[beta-D-GalNAc-(1-&gt;3)-beta-D-GlcNAc-(1-&gt;4)-alpha-D-Man]-L-Thr-[protein] + ATP = 3-O-[beta-D-GalNAc-(1-&gt;3)-beta-D-GlcNAc-(1-&gt;4)-(O-6-P-alpha-D-Man)]-Thr-[protein] + ADP + H(+). In terms of biological role, protein O-mannose kinase that specifically mediates phosphorylation at the 6-position of an O-mannose of the trisaccharide (N-acetylgalactosamine (GalNAc)-beta-1,3-N-acetylglucosamine (GlcNAc)-beta-1,4-mannose) to generate phosphorylated O-mannosyl trisaccharide (N-acetylgalactosamine-beta-1,3-N-acetylglucosamine-beta-1,4-(phosphate-6-)mannose). Phosphorylated O-mannosyl trisaccharide is a carbohydrate structure present in alpha-dystroglycan (DAG1), which is required for binding laminin G-like domain-containing extracellular proteins with high affinity. Only shows kinase activity when the GalNAc-beta-3-GlcNAc-beta-terminus is linked to the 4-position of O-mannose, suggesting that this disaccharide serves as the substrate recognition motif. This chain is Protein O-mannose kinase (Pomk), found in Rattus norvegicus (Rat).